The chain runs to 331 residues: Peroxidase 60 (331 aa).

The N-terminal stretch at 1 to 26 (MAVKISTIEVLILSLALLSFGHGCYG) is a signal peptide. Cystine bridges form between C37/C113, C70/C75, C119/C321, and C198/C230. The active-site Proton acceptor is H68. Positions 69, 74, 76, and 78 each coordinate Ca(2+). P161 contacts substrate. H191 lines the heme b pocket. Residue T192 coordinates Ca(2+). N-linked (GlcNAc...) asparagine glycosylation occurs at N245. The Ca(2+) site is built by S248 and D253.

It belongs to the peroxidase family. Classical plant (class III) peroxidase subfamily. Requires heme b as cofactor. Ca(2+) is required as a cofactor. As to expression, expressed in roots, slightly in leaves.

The protein localises to the secreted. The catalysed reaction is 2 a phenolic donor + H2O2 = 2 a phenolic radical donor + 2 H2O. Removal of H(2)O(2), oxidation of toxic reductants, biosynthesis and degradation of lignin, suberization, auxin catabolism, response to environmental stresses such as wounding, pathogen attack and oxidative stress. These functions might be dependent on each isozyme/isoform in each plant tissue. The chain is Peroxidase 60 (PER60) from Arabidopsis thaliana (Mouse-ear cress).